The primary structure comprises 386 residues: Putative 8-amino-7-oxononanoate synthase (386 aa).

Arg-22 is a binding site for substrate. 109–110 (GY) lines the pyridoxal 5'-phosphate pocket. Residue His-134 coordinates substrate. Pyridoxal 5'-phosphate contacts are provided by residues Ser-182, 207-210 (DEAH), and 238-241 (TLSK). Lys-241 carries the N6-(pyridoxal phosphate)lysine modification. Thr-356 serves as a coordination point for substrate.

The protein belongs to the class-II pyridoxal-phosphate-dependent aminotransferase family. BioF subfamily. Homodimer. The cofactor is pyridoxal 5'-phosphate.

It catalyses the reaction 6-carboxyhexanoyl-[ACP] + L-alanine + H(+) = (8S)-8-amino-7-oxononanoate + holo-[ACP] + CO2. Its pathway is cofactor biosynthesis; biotin biosynthesis. Its function is as follows. Catalyzes the decarboxylative condensation of pimeloyl-[acyl-carrier protein] and L-alanine to produce 8-amino-7-oxononanoate (AON), [acyl-carrier protein], and carbon dioxide. This Trichormus variabilis (strain ATCC 29413 / PCC 7937) (Anabaena variabilis) protein is Putative 8-amino-7-oxononanoate synthase (bioF).